Here is a 267-residue protein sequence, read N- to C-terminus: Protein isy-1 (267 aa).

A coiled-coil region spans residues 175 to 204 (LEKLIEEKNIERINKEFAEKQAQKQQTASD). The segment at 195–221 (QAQKQQTASDAAPENIYKVEEDDDDDL) is disordered.

Belongs to the ISY1 family. As to expression, ubiquitously expressed.

It is found in the nucleus. In terms of biological role, regulates the processing of the mir-60 microRNA (miRNA), which in turn negatively regulates the expression of the transcription factor zip-10. Does not affect the splicing of zip-10. The chain is Protein isy-1 from Caenorhabditis elegans.